The chain runs to 681 residues: Cobalamin-dependent radical SAM methyltransferase TokK (681 aa).

The region spanning 1 to 144 (MSAELASRGR…ATRLSDHPDY (144 aa)) is the B12-binding domain. Cob(II)alamin contacts are provided by Asn-18, Ser-72, Tyr-74, Val-75, His-103, Gly-126, and Glu-127. Residues 192-417 (RGLRFYALWE…RMYVERPGTP (226 aa)) form the Radical SAM core domain. Cys-206 and Cys-210 together coordinate [4Fe-4S] cluster. Residue Phe-212 coordinates 5'-deoxyadenosine. Cys-213 contributes to the [4Fe-4S] cluster binding site. 2 residues coordinate cob(II)alamin: Asp-214 and Cys-249. Positions 312, 349, and 384 each coordinate 5'-deoxyadenosine.

Belongs to the methyltransferase superfamily. The cofactor is [4Fe-4S] cluster. It depends on cob(II)alamin as a cofactor.

It functions in the pathway antibiotic biosynthesis. Methyltransferase involved in the biosynthesis of the beta-lactam carbapenem antibiotic asparenomycin. Catalyzes three consecutive S-adenosyl-L-methionine-dependent methylations to build out the C6-isopropyl side chain in a stereocontrolled manner. The protein is Cobalamin-dependent radical SAM methyltransferase TokK of Streptomyces tokunonensis.